The primary structure comprises 409 residues: Multifunctional CCA protein (409 aa).

Gly-8 and Arg-11 together coordinate ATP. The CTP site is built by Gly-8 and Arg-11. Mg(2+) contacts are provided by Asp-21 and Asp-23. ATP is bound by residues Arg-91, Arg-137, and Arg-140. Positions 91, 137, and 140 each coordinate CTP. One can recognise an HD domain in the interval 228-329 (TGAHTLSVLL…LELLQSFDVF (102 aa)).

It belongs to the tRNA nucleotidyltransferase/poly(A) polymerase family. Bacterial CCA-adding enzyme type 1 subfamily. As to quaternary structure, monomer. Can also form homodimers and oligomers. Requires Mg(2+) as cofactor. It depends on Ni(2+) as a cofactor.

The catalysed reaction is a tRNA precursor + 2 CTP + ATP = a tRNA with a 3' CCA end + 3 diphosphate. It catalyses the reaction a tRNA with a 3' CCA end + 2 CTP + ATP = a tRNA with a 3' CCACCA end + 3 diphosphate. In terms of biological role, catalyzes the addition and repair of the essential 3'-terminal CCA sequence in tRNAs without using a nucleic acid template. Adds these three nucleotides in the order of C, C, and A to the tRNA nucleotide-73, using CTP and ATP as substrates and producing inorganic pyrophosphate. tRNA 3'-terminal CCA addition is required both for tRNA processing and repair. Also involved in tRNA surveillance by mediating tandem CCA addition to generate a CCACCA at the 3' terminus of unstable tRNAs. While stable tRNAs receive only 3'-terminal CCA, unstable tRNAs are marked with CCACCA and rapidly degraded. The polypeptide is Multifunctional CCA protein (Pseudomonas fluorescens (strain ATCC BAA-477 / NRRL B-23932 / Pf-5)).